Consider the following 143-residue polypeptide: Sirohydrochlorin cobaltochelatase (143 aa).

The Proton acceptor role is filled by His9. His9 is a binding site for Co(2+). His9 lines the Ni(2+) pocket. Substrate-binding positions include Glu45 and 70 to 75; that span reads LAHGNH. Residue His75 coordinates Co(2+). His75 serves as a coordination point for Ni(2+).

Belongs to the CbiX family. CbiXS subfamily. Homotetramer; dimer of dimers.

The catalysed reaction is Co-sirohydrochlorin + 2 H(+) = sirohydrochlorin + Co(2+). It catalyses the reaction Ni-sirohydrochlorin + 2 H(+) = sirohydrochlorin + Ni(2+). The protein operates within cofactor biosynthesis; adenosylcobalamin biosynthesis; cob(II)yrinate a,c-diamide from sirohydrochlorin (anaerobic route): step 1/10. In terms of biological role, catalyzes the insertion of Co(2+) into sirohydrochlorin as part of the anaerobic pathway to cobalamin biosynthesis. Involved in the biosynthesis of the unique nickel-containing tetrapyrrole coenzyme F430, the prosthetic group of methyl-coenzyme M reductase (MCR), which plays a key role in methanogenesis and anaerobic methane oxidation. Catalyzes the insertion of Ni(2+) into sirohydrochlorin to yield Ni-sirohydrochlorin. The protein is Sirohydrochlorin cobaltochelatase of Methanococcus aeolicus (strain ATCC BAA-1280 / DSM 17508 / OCM 812 / Nankai-3).